Here is a 513-residue protein sequence, read N- to C-terminus: MESLKNNGEKIENFLNQLKNLQSNVDKDFKEFSNSPNTLNAEKDGEFLDKHDEELYNKQIIRSRLEDKISNLSSSMINDIGNDFQTGFQTILYNLPGVGPVFQMIFNIMGNGINLEKFYQEIITQVEQMIKKSLEDYYKNQCNTIFKNLGKACDQHKDLTQKWYDKNGIKSMNHLGKEIPQSTSSTIESDDTLTPMIHASYLDLKIKFNDAITSFTDAKYRGHVAPLLTYTSVMYVAFLRDILKYGKEMKFDDSVLNGSANTPGIKKMLNDFVNVTLSEFLISGREYTNVVNSLQEGYWITYPPPIYKVWVPPQQASWVSPPASELAHKFFLAHSDNYPQGGDLIYIKKDGVYELSPNKITHALEVYYSSGGGYGVNDYPSFRYGGKPIIPLLAPVGNAVFTMLNPNRYKRTFKIRIVHVIVREAKWNLDCYDNQVGEAGSFNQNFVFTSTNIVSDPICGNIGTVGITEIPGPFTTDKKYIRLTCIRKVNFPASKNEGYAVGSRILSVQLIDL.

To D.discoideum protein M3L.

The protein is cAMP-regulated M3R protein (prtB) of Dictyostelium discoideum (Social amoeba).